The sequence spans 129 residues: Large ribosomal subunit protein bL12c (129 aa).

Belongs to the bacterial ribosomal protein bL12 family. As to quaternary structure, homodimer. Part of the ribosomal stalk of the 50S ribosomal subunit. Forms a multimeric L10(L12)X complex, where L10 forms an elongated spine to which 2 to 4 L12 dimers bind in a sequential fashion. Binds GTP-bound translation factors.

Its subcellular location is the plastid. The protein localises to the chloroplast. In terms of biological role, forms part of the ribosomal stalk which helps the ribosome interact with GTP-bound translation factors. Is thus essential for accurate translation. The polypeptide is Large ribosomal subunit protein bL12c (Oltmannsiellopsis viridis (Marine flagellate)).